A 346-amino-acid chain; its full sequence is NADH-ubiquinone oxidoreductase chain 2 (346 aa).

Helical transmembrane passes span 1–21 (MNPH…TITI), 25–45 (HWIM…PLIS), 60–80 (FLVQ…NAWA), 96–116 (MLLT…FWFP), 124–144 (LTTA…ILLM), 149–169 (LNPT…GWMG), 178–198 (ILAF…IYNP), 200–220 (LTLL…LSLN), 242–262 (AALM…GFMP), 274–294 (EMTT…FFYL), and 325–345 (IAIL…ILAA).

The protein belongs to the complex I subunit 2 family.

It localises to the mitochondrion inner membrane. It catalyses the reaction a ubiquinone + NADH + 5 H(+)(in) = a ubiquinol + NAD(+) + 4 H(+)(out). Functionally, core subunit of the mitochondrial membrane respiratory chain NADH dehydrogenase (Complex I) that is believed to belong to the minimal assembly required for catalysis. Complex I functions in the transfer of electrons from NADH to the respiratory chain. The immediate electron acceptor for the enzyme is believed to be ubiquinone. The sequence is that of NADH-ubiquinone oxidoreductase chain 2 (MT-ND2) from Struthio camelus (Common ostrich).